The primary structure comprises 86 residues: Small ribosomal subunit protein bS20 (86 aa).

The segment at 1–27 (MANSKSAKKRAIQAEKRRQHNASRRSM) is disordered.

This sequence belongs to the bacterial ribosomal protein bS20 family.

Its function is as follows. Binds directly to 16S ribosomal RNA. The chain is Small ribosomal subunit protein bS20 from Vibrio atlanticus (strain LGP32) (Vibrio splendidus (strain Mel32)).